Reading from the N-terminus, the 960-residue chain is Semaphorin-6C (960 aa).

An N-terminal signal peptide occupies residues 1 to 23 (MPRAPHSMPLLLLLLLSLPQAQT). At 24–635 (AFPQDPIPLL…ASASRSIPIP (612 aa)) the chain is on the extracellular side. A Sema domain is found at 29–515 (PIPLLTSDLQ…FPGCIVYLSL (487 aa)). N-linked (GlcNAc...) asparagine glycosylation is present at asparagine 69. Cystine bridges form between cysteine 110-cysteine 120, cysteine 138-cysteine 147, cysteine 261-cysteine 372, and cysteine 286-cysteine 331. Residue asparagine 285 is glycosylated (N-linked (GlcNAc...) asparagine). The N-linked (GlcNAc...) asparagine glycan is linked to asparagine 436. 4 disulfide bridges follow: cysteine 478–cysteine 509, cysteine 518–cysteine 536, cysteine 524–cysteine 569, and cysteine 528–cysteine 544. The interval 555–624 (VDLTGNQESM…HTQGVRRDLS (70 aa)) is disordered. A helical transmembrane segment spans residues 636 to 656 (LLLACVAAAFALGASVSGLLV). At 657–960 (SCACRRANRR…PAPHGSHFNF (304 aa)) the chain is on the cytoplasmic side. 3 disordered regions span residues 685 to 725 (LARL…SPPE), 745 to 792 (ASGG…PGQE), and 806 to 960 (HGPQ…HFNF). Low complexity predominate over residues 899–909 (RVPSGGPSRYS). Over residues 922-935 (PDGHRGRSLKRVDV) the composition is skewed to basic and acidic residues. The span at 940-952 (SPKPPLATPPQPA) shows a compositional bias: pro residues.

The protein belongs to the semaphorin family. Expressed in many regions of the developing nervous system, probably in neurons and their precursors, but also in nonneural tissue such as immature muscle and dermis. In adult, strong expression in the skeletal muscle and moderate expression in the brain, where cerebellum shows the highest expression. Also expressed in almost all areas of the CNS.

The protein localises to the cell membrane. Shows growth cone collapsing activity on dorsal root ganglion (DRG) neurons in vitro. May be a stop signal for the DRG neurons in their target areas, and possibly also for other neurons. May also be involved in the maintenance and remodeling of neuronal connections. This Rattus norvegicus (Rat) protein is Semaphorin-6C (Sema6c).